The primary structure comprises 177 residues: Large ribosomal subunit protein uL6 (177 aa).

This sequence belongs to the universal ribosomal protein uL6 family. Part of the 50S ribosomal subunit.

Functionally, this protein binds to the 23S rRNA, and is important in its secondary structure. It is located near the subunit interface in the base of the L7/L12 stalk, and near the tRNA binding site of the peptidyltransferase center. The polypeptide is Large ribosomal subunit protein uL6 (Serratia proteamaculans (strain 568)).